We begin with the raw amino-acid sequence, 444 residues long: 23S rRNA (uracil(1939)-C(5))-methyltransferase RlmD (444 aa).

A TRAM domain is found at 5–67; the sequence is RNRFDRTPFQ…RHFDEAKTVE (63 aa). Positions 80, 86, 89, and 168 each coordinate [4Fe-4S] cluster. Residues Q276, F305, N310, E326, D353, and D374 each coordinate S-adenosyl-L-methionine. The active-site Nucleophile is the C400.

Belongs to the class I-like SAM-binding methyltransferase superfamily. RNA M5U methyltransferase family. RlmD subfamily.

The enzyme catalyses uridine(1939) in 23S rRNA + S-adenosyl-L-methionine = 5-methyluridine(1939) in 23S rRNA + S-adenosyl-L-homocysteine + H(+). Catalyzes the formation of 5-methyl-uridine at position 1939 (m5U1939) in 23S rRNA. The sequence is that of 23S rRNA (uracil(1939)-C(5))-methyltransferase RlmD from Xanthomonas campestris pv. campestris (strain 8004).